The sequence spans 122 residues: MSLHNKSLGSKGESLAVTYLERHRYKILERNFRCRGGEIDIVARDGKTIVFVEVKTRTSGHYGPPQLAVTSFKQRQISKAALTWLAKQRQLDACARFDVISITFSGQMPQIEHIPNAFELAY.

This sequence belongs to the UPF0102 family.

The polypeptide is UPF0102 protein Gmet_2864 (Geobacter metallireducens (strain ATCC 53774 / DSM 7210 / GS-15)).